Here is a 354-residue protein sequence, read N- to C-terminus: MPGGRDPMPSHTMELPRLIVIGEGNMGDLGPFLGSLGGPRTVSLISGRTVQGATGRKIEGSLKRSGIKWSWHMAGTNDPESIASVQEAVRSDESGMAVGIGGGRAVDTAKMAAFKLGIPFVSVPTAASHDGIASPFVSIKGDKPHSITATAPLGVFVDIGVIRKAPARLLASGCGDLVANMIAVRDWELGRDRKGEYYGRYAASLALMSAKIVMENAARFAREGVDERVVVEALISAGVASCIAGSSRPCSGAEHLFSHALDRIAPGAGLHGEKCGIGSIMMAKLQGQDWKGIAGALKSVGAPTTARQIGLDREDLIEALMTAQGLRPERYTILEEAGMSRRRAAALARVTGVA.

NAD(+) is bound by residues 103–107 (GRAVD) and 125–128 (TAAS). Aspartate 130 serves as a coordination point for substrate. Serine 134 provides a ligand contact to NAD(+). Residue aspartate 176 participates in substrate binding. The Zn(2+) site is built by aspartate 176 and histidine 255. Substrate is bound at residue histidine 259. Histidine 271 provides a ligand contact to Zn(2+).

It belongs to the glycerol-1-phosphate dehydrogenase family. In terms of assembly, homodimer. It depends on Zn(2+) as a cofactor.

The protein resides in the cytoplasm. The catalysed reaction is sn-glycerol 1-phosphate + NAD(+) = dihydroxyacetone phosphate + NADH + H(+). It carries out the reaction sn-glycerol 1-phosphate + NADP(+) = dihydroxyacetone phosphate + NADPH + H(+). It participates in membrane lipid metabolism; glycerophospholipid metabolism. In terms of biological role, catalyzes the NAD(P)H-dependent reduction of dihydroxyacetonephosphate (DHAP or glycerone phosphate) to glycerol 1-phosphate (G1P). The G1P thus generated is used as the glycerophosphate backbone of phospholipids in the cellular membranes of Archaea. This chain is Glycerol-1-phosphate dehydrogenase [NAD(P)+], found in Cenarchaeum symbiosum (strain A).